Here is a 279-residue protein sequence, read N- to C-terminus: Ribosomal RNA small subunit methyltransferase A (279 aa).

Positions 11, 13, 42, 63, 88, and 104 each coordinate S-adenosyl-L-methionine.

The protein belongs to the class I-like SAM-binding methyltransferase superfamily. rRNA adenine N(6)-methyltransferase family. RsmA subfamily.

The protein resides in the cytoplasm. It catalyses the reaction adenosine(1518)/adenosine(1519) in 16S rRNA + 4 S-adenosyl-L-methionine = N(6)-dimethyladenosine(1518)/N(6)-dimethyladenosine(1519) in 16S rRNA + 4 S-adenosyl-L-homocysteine + 4 H(+). Specifically dimethylates two adjacent adenosines (A1518 and A1519) in the loop of a conserved hairpin near the 3'-end of 16S rRNA in the 30S particle. May play a critical role in biogenesis of 30S subunits. This chain is Ribosomal RNA small subunit methyltransferase A, found in Synechococcus sp. (strain JA-3-3Ab) (Cyanobacteria bacterium Yellowstone A-Prime).